We begin with the raw amino-acid sequence, 119 residues long: Photosystem II extrinsic protein V (119 aa).

Positions 36, 39, and 40 each coordinate heme c.

It belongs to the cytochrome c family. PsbV subfamily. In terms of assembly, PSII is composed of 1 copy each of membrane proteins PsbA, PsbB, PsbC, PsbD, PsbE, PsbF, PsbH, PsbI, PsbJ, PsbK, PsbL, PsbM, PsbT, PsbX, PsbY, PsbZ, Psb30/Ycf12, peripheral proteins PsbO, CyanoQ (PsbQ), PsbU, PsbV and a large number of cofactors. It forms dimeric complexes. Requires heme c as cofactor.

The protein resides in the cellular thylakoid membrane. Functionally, one of the extrinsic, lumenal subunits of photosystem II (PSII). PSII is a light-driven water plastoquinone oxidoreductase, using light energy to abstract electrons from H(2)O, generating a proton gradient subsequently used for ATP formation. The extrinsic proteins stabilize the structure of photosystem II oxygen-evolving complex (OEC), the ion environment of oxygen evolution and protect the OEC against heat-induced inactivation. Low-potential cytochrome c that plays a role in the OEC of PSII. In Aphanizomenon flos-aquae, this protein is Photosystem II extrinsic protein V (psbV).